Reading from the N-terminus, the 458-residue chain is Argininosuccinate lyase (458 aa).

The protein belongs to the lyase 1 family. Argininosuccinate lyase subfamily.

It localises to the cytoplasm. It carries out the reaction 2-(N(omega)-L-arginino)succinate = fumarate + L-arginine. It participates in amino-acid biosynthesis; L-arginine biosynthesis; L-arginine from L-ornithine and carbamoyl phosphate: step 3/3. The sequence is that of Argininosuccinate lyase from Neisseria gonorrhoeae (strain ATCC 700825 / FA 1090).